The following is a 213-amino-acid chain: Pyridoxine/pyridoxamine 5'-phosphate oxidase (213 aa).

Residues 60–65 (RMVLMK), 75–76 (YS), Lys82, and Gln104 contribute to the FMN site. Lys65 serves as a coordination point for substrate. Substrate contacts are provided by Tyr122 and Arg126. Residues 139-140 (QS) and Trp184 each bind FMN. 190–192 (RLH) serves as a coordination point for substrate. FMN is bound at residue Arg194.

Belongs to the pyridoxamine 5'-phosphate oxidase family. As to quaternary structure, homodimer. It depends on FMN as a cofactor.

The catalysed reaction is pyridoxamine 5'-phosphate + O2 + H2O = pyridoxal 5'-phosphate + H2O2 + NH4(+). The enzyme catalyses pyridoxine 5'-phosphate + O2 = pyridoxal 5'-phosphate + H2O2. Its pathway is cofactor metabolism; pyridoxal 5'-phosphate salvage; pyridoxal 5'-phosphate from pyridoxamine 5'-phosphate: step 1/1. It participates in cofactor metabolism; pyridoxal 5'-phosphate salvage; pyridoxal 5'-phosphate from pyridoxine 5'-phosphate: step 1/1. In terms of biological role, catalyzes the oxidation of either pyridoxine 5'-phosphate (PNP) or pyridoxamine 5'-phosphate (PMP) into pyridoxal 5'-phosphate (PLP). The polypeptide is Pyridoxine/pyridoxamine 5'-phosphate oxidase (Nitrobacter winogradskyi (strain ATCC 25391 / DSM 10237 / CIP 104748 / NCIMB 11846 / Nb-255)).